The chain runs to 651 residues: Acetyl-coenzyme A synthetase (651 aa).

CoA contacts are provided by residues 189–192 (RGGK), threonine 311, and asparagine 335. Residues 387–389 (GEP), 411–416 (DTWWQT), aspartate 500, and arginine 515 each bind ATP. Serine 523 lines the CoA pocket. Position 526 (arginine 526) interacts with ATP. Residues valine 537, histidine 539, and valine 542 each coordinate Mg(2+). A CoA-binding site is contributed by arginine 586. Lysine 611 is modified (N6-acetyllysine).

This sequence belongs to the ATP-dependent AMP-binding enzyme family. Mg(2+) serves as cofactor. In terms of processing, acetylated. Deacetylation by the SIR2-homolog deacetylase activates the enzyme.

It carries out the reaction acetate + ATP + CoA = acetyl-CoA + AMP + diphosphate. Catalyzes the conversion of acetate into acetyl-CoA (AcCoA), an essential intermediate at the junction of anabolic and catabolic pathways. AcsA undergoes a two-step reaction. In the first half reaction, AcsA combines acetate with ATP to form acetyl-adenylate (AcAMP) intermediate. In the second half reaction, it can then transfer the acetyl group from AcAMP to the sulfhydryl group of CoA, forming the product AcCoA. The polypeptide is Acetyl-coenzyme A synthetase (Brucella melitensis biotype 1 (strain ATCC 23456 / CCUG 17765 / NCTC 10094 / 16M)).